Consider the following 543-residue polypeptide: MAKDIKFSENARRSLLKGVDKLADTVKTTLGPKGRNVVLEKSYGAPDITNDGVTIAKSIDLKDHFENMGAKLVSEAAQKTNDIAGDGTTTATVLTQAIVREGMKNVTAGANPVGIRRGIETATKAAVDELHKISHKVSTKDEIAQVASVSSASTEVGNLIADAMEKVGHDGVITIEESKGIDTELSVVEGMQFDRGYLSQYMVTDNDKMEADLDNPYILITDKKISNIQDILPLLQEIVQQGKSLLIIADDVDGEALPTLVLNKIRGTFNVVAVKAPGFGDRRKAMLEDIAILTGGTVISSDLGLELKDTKIDQLGKAGKVTVTKDSTTIVEGAGSKDAISERVDQIKKQIADTTSDFDREKLQERLAKLAGGVAVIKVGAATETELKERKYRIEDALNATRAAVEEGYVAGGGTALVDVMKSIQGNVKGDSQDAQTGVNIVMKALGAPVRQIAENAGKDGAVILDHLEHEDPEIGYNAATDKWENMVKAGIIDPTKVTRSALQNAASIAALLLTTEAVVADAPEDDKNQAPAAPNPGMGMGM.

ATP contacts are provided by residues 29-32 (TLGP), 86-90 (DGTTT), Gly413, 478-480 (NAA), and Asp494.

Belongs to the chaperonin (HSP60) family. As to quaternary structure, forms a cylinder of 14 subunits composed of two heptameric rings stacked back-to-back. Interacts with the co-chaperonin GroES.

The protein localises to the cytoplasm. It catalyses the reaction ATP + H2O + a folded polypeptide = ADP + phosphate + an unfolded polypeptide.. Functionally, together with its co-chaperonin GroES, plays an essential role in assisting protein folding. The GroEL-GroES system forms a nano-cage that allows encapsulation of the non-native substrate proteins and provides a physical environment optimized to promote and accelerate protein folding. The polypeptide is Chaperonin GroEL (Lactobacillus gasseri (strain ATCC 33323 / DSM 20243 / BCRC 14619 / CIP 102991 / JCM 1131 / KCTC 3163 / NCIMB 11718 / NCTC 13722 / AM63)).